The sequence spans 650 residues: Epithelial sodium channel subunit beta (650 aa).

Residues 1-95 are Cytoplasmic-facing; that stretch reads MLLHINPAYL…IICEGPKKKA (95 aa). A helical membrane pass occupies residues 96-116; sequence MWFLLTLLFTALVCWQWGIFI. The Extracellular segment spans residues 117 to 542; sequence RTYLSWEVSV…GGQFGFWMGG (426 aa). Cystine bridges form between Cys-143–Cys-317, Cys-229–Cys-234, Cys-241–Cys-248, Cys-294–Cys-301, and Cys-406–Cys-458. The N-linked (GlcNAc...) asparagine glycan is linked to Asn-244. Asn-305 is a glycosylation site (N-linked (GlcNAc...) asparagine). The chain crosses the membrane as a helical span at residues 543-563; that stretch reads SVLCLIEFGEIIIDFVWITII. Topologically, residues 564–650 are cytoplasmic; the sequence is KLVALAKSLR…IESDSEGDAI (87 aa). Residues 600–650 form a disordered region; sequence FQPDTAPRSPNTGPYPNEQALPIPGTPPPNYDSLRLQPLDVIESDSEGDAI. A PY motif; recruits WW domain-containing proteins and is thereby required for ubiquitination and inhibition of the channel by NEDD4 and NEDD4L motif is present at residues 626–630; it reads PPPNY. The segment covering 641-650 has biased composition (acidic residues); that stretch reads IESDSEGDAI. Phosphoserine occurs at positions 643 and 645.

The protein belongs to the amiloride-sensitive sodium channel (TC 1.A.6) family. SCNN1B subfamily. Component of the heterotrimeric epithelial sodium channel (ENaC) composed of an alpha/SCNN1A, a beta/SCNN1B and a gamma/SCNN1G subunit. An additional delta/SCNN1D subunit can replace the alpha/SCNN1A subunit to form an alternative channel with specific properties. Interacts with WWP1 (via WW domains). Interacts with WWP2 (via WW domains); inhibits the channel. Interacts with the full-length immature form of PCSK9 (pro-PCSK9). Interacts (N-glycosylated) with BPIFA1; the interaction is direct and inhibits the proteolytic processing of SCNN1A and SCNN1G and the activation of ENaC. Ubiquitinated. Can be ubiquitinated at multiple sites and undergo monoubiquitination and polyubiquitination. Ubiquitination by NEDD4 or NEDD4L inhibits the ENaC channel through endocytosis, intracellular retention and degradation of its individual subunits. However, some studies could not confirm the ubiquitination of this subunit of the ENaC. Post-translationally, phosphorylated on serine and threonine residues. Aldosterone and insulin increase the basal level of phosphorylation. In terms of processing, N-glycosylated. N-glycosylation is required for interaction with BPIFA1.

The protein resides in the apical cell membrane. It is found in the cytoplasmic vesicle membrane. The enzyme catalyses Na(+)(in) = Na(+)(out). With respect to regulation, originally identified and characterized by its inhibition by the diuretic drug amiloride. Its function is as follows. This is one of the three pore-forming subunits of the heterotrimeric epithelial sodium channel (ENaC), a critical regulator of sodium balance and fluid homeostasis. ENaC operates in epithelial tissues, where it mediates the electrodiffusion of sodium ions from extracellular fluid through the apical membrane of cells, with water following osmotically. It plays a key role in maintaining sodium homeostasis through electrogenic sodium reabsorption in the kidneys. Additionally, ENaC is essential for airway surface liquid homeostasis, which is crucial for proper mucus clearance. In Pan troglodytes (Chimpanzee), this protein is Epithelial sodium channel subunit beta.